A 78-amino-acid chain; its full sequence is MKNLLLTFLVVTIVCLDLGYTLICHRVHGLQTCEPDQKFCFRKTTMFFPNHPVLLMGCTYSCPTEKYSVCCSTDKCNK.

The N-terminal stretch at 1–21 (MKNLLLTFLVVTIVCLDLGYT) is a signal peptide. Intrachain disulfides connect C24-C40, C33-C58, C62-C70, and C71-C76.

This sequence belongs to the three-finger toxin family. Short-chain subfamily. Expressed by the venom gland.

It is found in the secreted. Its function is as follows. This three-finger toxin binds and inhibits the nicotinic acetylcholine receptor (nAChR). The polypeptide is Short neurotoxin OH-5 (Ophiophagus hannah (King cobra)).